We begin with the raw amino-acid sequence, 654 residues long: Fructose-1,6-bisphosphatase class 3 (654 aa).

The interval 288-307 is disordered; the sequence is NPAFKPKKRPDKHERLTQRE. Over residues 298-307 the composition is skewed to basic and acidic residues; it reads DKHERLTQRE.

Belongs to the FBPase class 3 family. It depends on Mn(2+) as a cofactor.

It catalyses the reaction beta-D-fructose 1,6-bisphosphate + H2O = beta-D-fructose 6-phosphate + phosphate. It functions in the pathway carbohydrate biosynthesis; gluconeogenesis. The sequence is that of Fructose-1,6-bisphosphatase class 3 from Staphylococcus aureus (strain MSSA476).